A 292-amino-acid polypeptide reads, in one-letter code: 4-hydroxy-tetrahydrodipicolinate synthase (292 aa).

Thr-45 provides a ligand contact to pyruvate. Tyr-133 serves as the catalytic Proton donor/acceptor. The Schiff-base intermediate with substrate role is filled by Lys-161. Residue Ile-203 coordinates pyruvate.

Belongs to the DapA family. Homotetramer; dimer of dimers.

It is found in the cytoplasm. It catalyses the reaction L-aspartate 4-semialdehyde + pyruvate = (2S,4S)-4-hydroxy-2,3,4,5-tetrahydrodipicolinate + H2O + H(+). The protein operates within amino-acid biosynthesis; L-lysine biosynthesis via DAP pathway; (S)-tetrahydrodipicolinate from L-aspartate: step 3/4. Functionally, catalyzes the condensation of (S)-aspartate-beta-semialdehyde [(S)-ASA] and pyruvate to 4-hydroxy-tetrahydrodipicolinate (HTPA). This Dechloromonas aromatica (strain RCB) protein is 4-hydroxy-tetrahydrodipicolinate synthase.